We begin with the raw amino-acid sequence, 215 residues long: uncharacterized protein (215 aa).

Positions 53, 74, and 97 each coordinate S-adenosyl-L-methionine.

Belongs to the methyltransferase superfamily. YrrT family.

Could be a S-adenosyl-L-methionine-dependent methyltransferase. This is an uncharacterized protein from Geobacillus kaustophilus (strain HTA426).